A 164-amino-acid polypeptide reads, in one-letter code: PTS system sorbose-specific EIIB component (164 aa).

One can recognise a PTS EIIB type-4 domain in the interval 1–164; that stretch reads MQITLARIDD…DKINETAFCE (164 aa). The active-site Pros-phosphohistidine intermediate is the histidine 14. The residue at position 14 (histidine 14) is a Phosphohistidine; by EIIA.

In terms of assembly, dimer of dimers.

Its subcellular location is the cytoplasm. The catalysed reaction is keto-L-sorbose(out) + N(pros)-phospho-L-histidyl-[protein] = L-sorbose 1-phosphate(in) + L-histidyl-[protein]. The phosphoenolpyruvate-dependent sugar phosphotransferase system (PTS), a major carbohydrate active transport system, catalyzes the phosphorylation of incoming sugar substrates concomitant with their translocation across the cell membrane. The enzyme II SorABFM PTS system is involved in L-sorbose transport. In Klebsiella pneumoniae, this protein is PTS system sorbose-specific EIIB component.